The sequence spans 122 residues: Pupal cuticle protein Edg-78E (122 aa).

The first 16 residues, 1–16 (MYKYLFCLALIGCACA), serve as a signal peptide directing secretion. Residues 36–96 (EGNYQYAYET…PVGDHLPTPP (61 aa)) enclose the Chitin-binding type R&amp;R domain.

As to expression, imaginal (anterior) epidermis.

In terms of biological role, component of the cuticle of the pupa of fruit fly. In Drosophila melanogaster (Fruit fly), this protein is Pupal cuticle protein Edg-78E (Edg78E).